We begin with the raw amino-acid sequence, 208 residues long: Large ribosomal subunit protein eL13 (208 aa).

Residues S177 and S180 each carry the phosphoserine modification.

It belongs to the eukaryotic ribosomal protein eL13 family. As to quaternary structure, component of the large ribosomal subunit (LSU). Mature yeast ribosomes consist of a small (40S) and a large (60S) subunit. The 40S small subunit contains 1 molecule of ribosomal RNA (18S rRNA) and at least 33 different proteins. The large 60S subunit contains 3 rRNA molecules (25S, 5.8S and 5S rRNA) and at least 46 different proteins.

It is found in the cytoplasm. Functionally, component of the ribosome, a large ribonucleoprotein complex responsible for the synthesis of proteins in the cell. The small ribosomal subunit (SSU) binds messenger RNAs (mRNAs) and translates the encoded message by selecting cognate aminoacyl-transfer RNA (tRNA) molecules. The large subunit (LSU) contains the ribosomal catalytic site termed the peptidyl transferase center (PTC), which catalyzes the formation of peptide bonds, thereby polymerizing the amino acids delivered by tRNAs into a polypeptide chain. The nascent polypeptides leave the ribosome through a tunnel in the LSU and interact with protein factors that function in enzymatic processing, targeting, and the membrane insertion of nascent chains at the exit of the ribosomal tunnel. In Schizosaccharomyces pombe (strain 972 / ATCC 24843) (Fission yeast), this protein is Large ribosomal subunit protein eL13 (rpl13).